Reading from the N-terminus, the 252-residue chain is Hydroxyacylglutathione hydrolase (252 aa).

Positions 54, 56, 58, 59, 111, 128, and 166 each coordinate Zn(2+).

It belongs to the metallo-beta-lactamase superfamily. Glyoxalase II family. In terms of assembly, monomer. Requires Zn(2+) as cofactor.

The enzyme catalyses an S-(2-hydroxyacyl)glutathione + H2O = a 2-hydroxy carboxylate + glutathione + H(+). The protein operates within secondary metabolite metabolism; methylglyoxal degradation; (R)-lactate from methylglyoxal: step 2/2. In terms of biological role, thiolesterase that catalyzes the hydrolysis of S-D-lactoyl-glutathione to form glutathione and D-lactic acid. The protein is Hydroxyacylglutathione hydrolase of Aliivibrio fischeri (strain MJ11) (Vibrio fischeri).